Consider the following 158-residue polypeptide: Transcriptional repressor NrdR (158 aa).

A zinc finger spans residues 3–34; the sequence is CPFCNSEETRVIDTRLTDDGHVVRRRRECEHC. The ATP-cone domain maps to 49–139; it reads IFVVKKGGQR…VYKEFRDLDH (91 aa).

The protein belongs to the NrdR family. The cofactor is Zn(2+).

Functionally, negatively regulates transcription of bacterial ribonucleotide reductase nrd genes and operons by binding to NrdR-boxes. The protein is Transcriptional repressor NrdR of Kosmotoga olearia (strain ATCC BAA-1733 / DSM 21960 / TBF 19.5.1).